The following is a 152-amino-acid chain: Probable histone H2A.3 (152 aa).

2 disordered regions span residues 1–25 (MDAS…KKSV) and 129–152 (KTER…PKKA). A compositionally biased stretch (basic residues) spans 7 to 25 (TTKKGAGGRKGGGPRKKSV). Basic and acidic residues predominate over residues 129 to 142 (KTERANTGGKEPKT). The short motif at 148 to 151 (SPKK) is the SPKK motif element.

Belongs to the histone H2A family. As to quaternary structure, the nucleosome is a histone octamer containing two molecules each of H2A, H2B, H3 and H4 assembled in one H3-H4 heterotetramer and two H2A-H2B heterodimers. The octamer wraps approximately 147 bp of DNA.

The protein resides in the nucleus. Its subcellular location is the chromosome. Functionally, core component of nucleosome. Nucleosomes wrap and compact DNA into chromatin, limiting DNA accessibility to the cellular machineries which require DNA as a template. Histones thereby play a central role in transcription regulation, DNA repair, DNA replication and chromosomal stability. DNA accessibility is regulated via a complex set of post-translational modifications of histones, also called histone code, and nucleosome remodeling. The chain is Probable histone H2A.3 from Medicago truncatula (Barrel medic).